A 301-amino-acid chain; its full sequence is GTPase Era (301 aa).

The Era-type G domain maps to 7–175; sequence YCGFIAIVGR…ASIVRKHLPE (169 aa). The G1 stretch occupies residues 15–22; it reads GRPNVGKS. Residue 15-22 coordinates GTP; the sequence is GRPNVGKS. The G2 stretch occupies residues 41–45; it reads QTTRH. Positions 62-65 are G3; it reads DTPG. GTP-binding positions include 62–66 and 124–127; these read DTPGL and NKVD. The segment at 124–127 is G4; that stretch reads NKVD. A G5 region spans residues 154-156; it reads ISA. The KH type-2 domain occupies 206–283; sequence LGAELPYSVT…HLELWVKVKS (78 aa).

It belongs to the TRAFAC class TrmE-Era-EngA-EngB-Septin-like GTPase superfamily. Era GTPase family. Monomer.

It localises to the cytoplasm. Its subcellular location is the cell inner membrane. Functionally, an essential GTPase that binds both GDP and GTP, with rapid nucleotide exchange. Plays a role in 16S rRNA processing and 30S ribosomal subunit biogenesis and possibly also in cell cycle regulation and energy metabolism. The sequence is that of GTPase Era from Salmonella arizonae (strain ATCC BAA-731 / CDC346-86 / RSK2980).